Here is a 281-residue protein sequence, read N- to C-terminus: DegV domain-containing protein YqaC (281 aa).

A DegV domain is found at 3–279; sequence LAVITDSSAD…LNTVAYGISP (277 aa). Thr-60 and Ser-93 together coordinate hexadecanoate.

Functionally, may bind long-chain fatty acids, such as palmitate, and may play a role in lipid transport or fatty acid metabolism. The protein is DegV domain-containing protein YqaC (yqaC) of Lactococcus lactis subsp. lactis (strain IL1403) (Streptococcus lactis).